The sequence spans 179 residues: Large ribosomal subunit protein uL6 (179 aa).

It belongs to the universal ribosomal protein uL6 family. Part of the 50S ribosomal subunit.

In terms of biological role, this protein binds to the 23S rRNA, and is important in its secondary structure. It is located near the subunit interface in the base of the L7/L12 stalk, and near the tRNA binding site of the peptidyltransferase center. The sequence is that of Large ribosomal subunit protein uL6 from Leptospira interrogans serogroup Icterohaemorrhagiae serovar copenhageni (strain Fiocruz L1-130).